The following is a 369-amino-acid chain: uncharacterized protein (369 aa).

The segment at Met1–Asn35 is disordered. The span at Gln17–His27 shows a compositional bias: basic and acidic residues. WD repeat units follow at residues Gly83 to Thr127, Gly130 to Leu169, Gly174 to Leu213, Gly220 to Thr260, Glu263 to Ile301, and Gly304 to Glu341.

This is an uncharacterized protein from Schizosaccharomyces pombe (strain 972 / ATCC 24843) (Fission yeast).